Consider the following 343-residue polypeptide: Anthranilate phosphoribosyltransferase (343 aa).

Residues G78, 81–82 (GD), T86, 88–91 (NIST), 106–114 (KHGNRSVSS), and S118 contribute to the 5-phospho-alpha-D-ribose 1-diphosphate site. G78 contributes to the anthranilate binding site. Position 90 (S90) interacts with Mg(2+). N109 serves as a coordination point for anthranilate. R164 lines the anthranilate pocket. Mg(2+) contacts are provided by D223 and E224.

The protein belongs to the anthranilate phosphoribosyltransferase family. As to quaternary structure, homodimer. It depends on Mg(2+) as a cofactor.

It catalyses the reaction N-(5-phospho-beta-D-ribosyl)anthranilate + diphosphate = 5-phospho-alpha-D-ribose 1-diphosphate + anthranilate. It participates in amino-acid biosynthesis; L-tryptophan biosynthesis; L-tryptophan from chorismate: step 2/5. Functionally, catalyzes the transfer of the phosphoribosyl group of 5-phosphorylribose-1-pyrophosphate (PRPP) to anthranilate to yield N-(5'-phosphoribosyl)-anthranilate (PRA). The sequence is that of Anthranilate phosphoribosyltransferase from Chlamydia felis (strain Fe/C-56) (Chlamydophila felis).